The following is a 650-amino-acid chain: Acetyl-coenzyme A synthetase (650 aa).

CoA contacts are provided by residues 191-194 (RGGR), Thr-311, and Asn-335. Residues 387 to 389 (GEP), 411 to 416 (DTWWQT), Asp-500, and Arg-515 contribute to the ATP site. Ser-523 contacts CoA. Arg-526 contributes to the ATP binding site. Mg(2+) contacts are provided by Val-537, His-539, and Val-542. Residue Arg-584 coordinates CoA. At Lys-609 the chain carries N6-acetyllysine.

The protein belongs to the ATP-dependent AMP-binding enzyme family. The cofactor is Mg(2+). Post-translationally, acetylated. Deacetylation by the SIR2-homolog deacetylase activates the enzyme.

The enzyme catalyses acetate + ATP + CoA = acetyl-CoA + AMP + diphosphate. In terms of biological role, catalyzes the conversion of acetate into acetyl-CoA (AcCoA), an essential intermediate at the junction of anabolic and catabolic pathways. AcsA undergoes a two-step reaction. In the first half reaction, AcsA combines acetate with ATP to form acetyl-adenylate (AcAMP) intermediate. In the second half reaction, it can then transfer the acetyl group from AcAMP to the sulfhydryl group of CoA, forming the product AcCoA. The sequence is that of Acetyl-coenzyme A synthetase from Shewanella putrefaciens (strain CN-32 / ATCC BAA-453).